Here is a 591-residue protein sequence, read N- to C-terminus: MSNYNVSLVGPAPWGFRLQGGKDFNMPLTISSLKDGGKASQAHVRIGDVVLSIDGISAQGMTHLEAQNKIKACTGSLNMTLQRASAAAKSEPVAVQKGEPKEVVKPVPITSPAVSKVTSTTNMAYNKVPRPFGSVSSPKVTSIPSPSSAFTPAHAATSSHASPPPVAAVTPPPLSASGLHASANPSAAQCSSPPNTGKPAVHVPRQPTVTSVCSESAQELAEGQRRGSQGDIKQQNGPPRKHIVERNTEFYHIPTHSDASKKRLIEDTEDWRPRTGTTQSRSFRILAQITGTEHLKESENDNAKKANSTPEPSQQSASPLSAAESLESPGSNRPVVAGLRSAAAFKPVGSTSVKSPSWQRPNQAAPSTGRISNSASSSGTGAPMKPAVGPPQPSDQDTLVQRAEHIPAGKRTPMCAHCNQAIRGPFLVALGKSWHPEEFNCAHCKNTMAYIGFVEEKGALYCELCYEKFFAPECGRCQRKILGEVINALKQTWHVSCFVCVACGKPIRNNVFHLEDGEPYCETDYYALFGTICRGCEFPIEAGDMFLEALGSTWHDTCFVCSVCCESLEGQTFFSKKDKPLCKKHAHSVNF.

Serine 2 carries the post-translational modification N-acetylserine. Serine 2 is modified (phosphoserine). The PDZ domain maps to 2-85 (SNYNVSLVGP…SLNMTLQRAS (84 aa)). The residue at position 89 (lysine 89) is an N6-acetyllysine; alternate. N6-succinyllysine; alternate is present on lysine 89. Residue lysine 89 forms a Glycyl lysine isopeptide (Lys-Gly) (interchain with G-Cter in SUMO2); alternate linkage. 3 positions are modified to phosphoserine: serine 111, serine 134, and serine 137. 2 disordered regions span residues 125–240 (YNKV…GPPR) and 255–334 (THSD…SNRP). A compositionally biased stretch (polar residues) spans 134–143 (SVSSPKVTSI). Low complexity predominate over residues 144–161 (PSPSSAFTPAHAATSSHA). The span at 162 to 174 (SPPPVAAVTPPPL) shows a compositional bias: pro residues. Composition is skewed to polar residues over residues 183 to 195 (ANPS…SPPN) and 207 to 217 (PTVTSVCSESA). Phosphoserine is present on residues serine 228 and serine 260. Basic and acidic residues-rich tracts occupy residues 258-273 (DASK…DWRP) and 293-304 (EHLKESENDNAK). The span at 310-329 (PEPSQQSASPLSAAESLESP) shows a compositional bias: low complexity. A phosphoserine mark is found at serine 313 and serine 318. Lysine 346 is subject to N6-acetyllysine. The segment at 348-398 (VGSTSVKSPSWQRPNQAAPSTGRISNSASSSGTGAPMKPAVGPPQPSDQDT) is disordered. Residues 349–380 (GSTSVKSPSWQRPNQAAPSTGRISNSASSSGT) are compositionally biased toward polar residues. Phosphoserine is present on residues serine 355 and serine 357. 3 LIM zinc-binding domains span residues 413–472 (PMCA…FFAP), 472–531 (PECG…LFGT), and 531–591 (TICR…SVNF).

As to quaternary structure, interacts with various PKC isoforms through the LIM domains. Interacts with actin and alpha-actinin through the PDZ domain. Interacts (via LIM domains) with SIPA1L1/SPAR; this interaction may occur preferentially with isoform 1. Detected in brain, in neurons, including in hippocampal neurons, and glial cells (at protein level). Detected in heart and skeletal muscle.

It is found in the postsynaptic density. Its subcellular location is the presynapse. The protein resides in the postsynapse. The protein localises to the cytoplasm. It localises to the cytosol. In terms of biological role, may play an important role in the heart development by scaffolding PKC to the Z-disk region. May play a role in the regulation of cardiomyocyte expansion. Isoforms lacking the LIM domains may negatively modulate the scaffolding activity of isoform 1. Overexpression promotes the development of heart hypertrophy. Contributes to the regulation of dendritic spine morphogenesis in neurons. May be required to restrain postsynaptic growth of excitatory synapses. Isoform 1, but not isoform 2, expression favors spine thinning and elongation. The chain is PDZ and LIM domain protein 5 (Pdlim5) from Rattus norvegicus (Rat).